Consider the following 236-residue polypeptide: Small ribosomal subunit protein uS3 (236 aa).

The KH type-2 domain occupies 38–106 (LRRYLHTRLK…DIQINISEIK (69 aa)). A disordered region spans residues 211–236 (DLSPNVQAQQRKMKESPQQRRQRRGG).

It belongs to the universal ribosomal protein uS3 family. In terms of assembly, part of the 30S ribosomal subunit. Forms a tight complex with proteins S10 and S14.

Its function is as follows. Binds the lower part of the 30S subunit head. Binds mRNA in the 70S ribosome, positioning it for translation. This chain is Small ribosomal subunit protein uS3, found in Salinibacter ruber (strain DSM 13855 / M31).